A 117-amino-acid polypeptide reads, in one-letter code: Immunoglobulin lambda variable 1-44 (117 aa).

The first 19 residues, 1–19, serve as a signal peptide directing secretion; the sequence is MASFPLLLTLLTHCAGSWA. A Pyrrolidone carboxylic acid modification is found at Gln20. A framework-1 region spans residues 20–44; it reads QSVLTQPPSASGTPGQRVTISCSGS. The Ig-like domain maps to 20–117; that stretch reads QSVLTQPPSA…CAAWDDSLNG (98 aa). Residues 24–35 show a composition bias toward polar residues; it reads TQPPSASGTPGQ. Positions 24–45 are disordered; the sequence is TQPPSASGTPGQRVTISCSGSS. Cys41 and Cys108 form a disulfide bridge. A complementarity-determining-1 region spans residues 45 to 52; that stretch reads SSNIGSNT. A framework-2 region spans residues 53–69; it reads VNWYQQLPGTAPKLLIY. Positions 70–72 are complementarity-determining-2; it reads SNN. The tract at residues 73–108 is framework-3; that stretch reads QRPSGVPDRFSGSKSGTSASLAISGLQSEDEADYYC. A complementarity-determining-3 region spans residues 109-117; that stretch reads AAWDDSLNG.

In terms of assembly, immunoglobulins are composed of two identical heavy chains and two identical light chains; disulfide-linked.

The protein localises to the secreted. It is found in the cell membrane. In terms of biological role, v region of the variable domain of immunoglobulin light chains that participates in the antigen recognition. Immunoglobulins, also known as antibodies, are membrane-bound or secreted glycoproteins produced by B lymphocytes. In the recognition phase of humoral immunity, the membrane-bound immunoglobulins serve as receptors which, upon binding of a specific antigen, trigger the clonal expansion and differentiation of B lymphocytes into immunoglobulins-secreting plasma cells. Secreted immunoglobulins mediate the effector phase of humoral immunity, which results in the elimination of bound antigens. The antigen binding site is formed by the variable domain of one heavy chain, together with that of its associated light chain. Thus, each immunoglobulin has two antigen binding sites with remarkable affinity for a particular antigen. The variable domains are assembled by a process called V-(D)-J rearrangement and can then be subjected to somatic hypermutations which, after exposure to antigen and selection, allow affinity maturation for a particular antigen. This Homo sapiens (Human) protein is Immunoglobulin lambda variable 1-44.